Consider the following 391-residue polypeptide: 2-deoxy-scyllo-inosose synthase (391 aa).

Residues Asp42, 73 to 76 (EVHK), 105 to 109 (GVTGN), 129 to 130 (TT), 140 to 142 (SLK), and 151 to 152 (KN) each bind NAD(+). The active site involves Lys142. Residue Glu184 participates in Co(2+) binding. Glu244 is an active-site residue. Co(2+)-binding residues include His247 and His263.

The protein belongs to the sugar phosphate cyclases superfamily. DOI synthase family. NAD(+) serves as cofactor. Co(2+) is required as a cofactor.

The enzyme catalyses D-glucose 6-phosphate = 2-deoxy-L-scyllo-inosose + phosphate. It functions in the pathway metabolic intermediate biosynthesis; 2-deoxystreptamine biosynthesis; 2-deoxystreptamine from D-glucose 6-phosphate: step 1/4. It participates in antibiotic biosynthesis; ribostamycin biosynthesis. Functionally, catalyzes the intramolecular carbocycle formation from D-glucose-6-phosphate to 2-deoxy-scyllo-inosose (DOI). This is 2-deoxy-scyllo-inosose synthase (rbmA) from Streptomyces ribosidificus.